The following is a 952-amino-acid chain: UvrABC system protein A (952 aa).

38-45 (GLSGSGKS) is a binding site for ATP. A C4-type zinc finger spans residues 259-286 (CDKCGFSISELEPRLFSFNSPLGSCSYC). ABC transporter domains follow at residues 316–595 (FKNI…SNSI) and 615–944 (GNGK…QYLS). 647–654 (GVSGSGKS) is a binding site for ATP. The segment at 746–772 (CDKCFGDGVIRIEMHFLPDVYVKCEVC) adopts a C4-type zinc-finger fold.

This sequence belongs to the ABC transporter superfamily. UvrA family. In terms of assembly, forms a heterotetramer with UvrB during the search for lesions.

It localises to the cytoplasm. The UvrABC repair system catalyzes the recognition and processing of DNA lesions. UvrA is an ATPase and a DNA-binding protein. A damage recognition complex composed of 2 UvrA and 2 UvrB subunits scans DNA for abnormalities. When the presence of a lesion has been verified by UvrB, the UvrA molecules dissociate. The protein is UvrABC system protein A of Mycoplasma genitalium (strain ATCC 33530 / DSM 19775 / NCTC 10195 / G37) (Mycoplasmoides genitalium).